The sequence spans 289 residues: 4-diphosphocytidyl-2-C-methyl-D-erythritol kinase (289 aa).

Lys-10 is an active-site residue. An ATP-binding site is contributed by 94 to 104 (PVAAGLAGGSS). Residue Asp-136 is part of the active site.

The protein belongs to the GHMP kinase family. IspE subfamily.

It catalyses the reaction 4-CDP-2-C-methyl-D-erythritol + ATP = 4-CDP-2-C-methyl-D-erythritol 2-phosphate + ADP + H(+). The protein operates within isoprenoid biosynthesis; isopentenyl diphosphate biosynthesis via DXP pathway; isopentenyl diphosphate from 1-deoxy-D-xylulose 5-phosphate: step 3/6. Catalyzes the phosphorylation of the position 2 hydroxy group of 4-diphosphocytidyl-2C-methyl-D-erythritol. In Bacillus pumilus (strain SAFR-032), this protein is 4-diphosphocytidyl-2-C-methyl-D-erythritol kinase.